The sequence spans 468 residues: Argininosuccinate lyase (468 aa).

Belongs to the lyase 1 family. Argininosuccinate lyase subfamily.

Its subcellular location is the cytoplasm. The catalysed reaction is 2-(N(omega)-L-arginino)succinate = fumarate + L-arginine. The protein operates within amino-acid biosynthesis; L-arginine biosynthesis; L-arginine from L-ornithine and carbamoyl phosphate: step 3/3. The chain is Argininosuccinate lyase from Gloeobacter violaceus (strain ATCC 29082 / PCC 7421).